A 178-amino-acid polypeptide reads, in one-letter code: Large ribosomal subunit protein eL20w (178 aa).

The protein belongs to the eukaryotic ribosomal protein eL20 family.

In Arabidopsis thaliana (Mouse-ear cress), this protein is Large ribosomal subunit protein eL20w (RPL18AD).